A 344-amino-acid chain; its full sequence is Polyhomeotic-like protein 2 (344 aa).

Residues 1–23 (MTSGNGSSPVPTAATGNRTQNGE) are compositionally biased toward polar residues. The disordered stretch occupies residues 1-28 (MTSGNGSSPVPTAATGNRTQNGENKPPQ). The HD1 motif lies at 25-53 (KPPQAVVKPQILTHFIEGFVIQEGAQPFP). Residues 114 to 148 (GDGDPPKLKCELCGRVDFEYKFKRSKRFCSMACAK) form an FCS-type zinc finger. Zn(2+) is bound by residues Cys123, Cys126, Cys142, and Cys146. The interval 165 to 269 (RSKLQKPTVA…LHSRDPIAMS (105 aa)) is disordered. Residues 173-183 (VAKHARRRSRK) are compositionally biased toward basic residues. The span at 216 to 233 (KLSNSQEDSSRCSDNSSY) shows a compositional bias: polar residues. A compositionally biased stretch (low complexity) spans 234-248 (EEPLSPMSASSSLSR). In terms of domain architecture, SAM spans 280 to 344 (WNVEDVYDFV…YARISMLKDS (65 aa)).

Component of a PRC1-like complex.

The protein localises to the nucleus. Component of a Polycomb group (PcG) multiprotein PRC1-like complex, a complex class required to maintain the transcriptionally repressive state of many genes, including Hox genes, throughout development. PcG PRC1 complex acts via chromatin remodeling and modification of histones; it mediates monoubiquitination of histone H2A 'Lys-119', rendering chromatin heritably changed in its expressibility. The polypeptide is Polyhomeotic-like protein 2 (phc2) (Xenopus laevis (African clawed frog)).